The chain runs to 23 residues: Acidic phospholipase A2 Ts-A2 (23 aa).

It depends on Ca(2+) as a cofactor. Post-translationally, contains 7 disulfide bonds. In terms of tissue distribution, expressed by the venom gland.

The protein resides in the secreted. It carries out the reaction a 1,2-diacyl-sn-glycero-3-phosphocholine + H2O = a 1-acyl-sn-glycero-3-phosphocholine + a fatty acid + H(+). Functionally, exhibits moderate hydrolytic activities and prefers the anionic micelles (dPPC with deoxycholate) to the zwitterionic micelles (dPPC with Triton X-100). PLA2 catalyzes the calcium-dependent hydrolysis of the 2-acyl groups in 3-sn-phosphoglycerides. The polypeptide is Acidic phospholipase A2 Ts-A2 (Trimeresurus stejnegeri (Chinese green tree viper)).